A 620-amino-acid polypeptide reads, in one-letter code: Protein AFR1 (620 aa).

The segment covering 1 to 12 (MEGSYLSAQENQ) has biased composition (polar residues). The tract at residues 1-20 (MEGSYLSAQENQPIPERLIP) is disordered. 2 positions are modified to phosphoserine: S472 and S526.

The protein to yeast YER158C.

In terms of biological role, acts in conjunction with the alpha-factor receptor to promote morphogenesis and adaptation. In Saccharomyces cerevisiae (strain ATCC 204508 / S288c) (Baker's yeast), this protein is Protein AFR1 (AFR1).